The chain runs to 68 residues: Large ribosomal subunit protein bL35 (68 aa).

It belongs to the bacterial ribosomal protein bL35 family.

This Rickettsia canadensis (strain McKiel) protein is Large ribosomal subunit protein bL35.